The chain runs to 195 residues: Imidazole glycerol phosphate synthase subunit HisH 2 (195 aa).

Residues 2–195 form the Glutamine amidotransferase type-1 domain; the sequence is KIIIIDTACA…LISNFIKDIG (194 aa). The active-site Nucleophile is the C77. Residues H175 and E177 contribute to the active site.

As to quaternary structure, heterodimer of HisH and HisF.

The protein localises to the cytoplasm. The catalysed reaction is 5-[(5-phospho-1-deoxy-D-ribulos-1-ylimino)methylamino]-1-(5-phospho-beta-D-ribosyl)imidazole-4-carboxamide + L-glutamine = D-erythro-1-(imidazol-4-yl)glycerol 3-phosphate + 5-amino-1-(5-phospho-beta-D-ribosyl)imidazole-4-carboxamide + L-glutamate + H(+). The enzyme catalyses L-glutamine + H2O = L-glutamate + NH4(+). It participates in amino-acid biosynthesis; L-histidine biosynthesis; L-histidine from 5-phospho-alpha-D-ribose 1-diphosphate: step 5/9. Its function is as follows. IGPS catalyzes the conversion of PRFAR and glutamine to IGP, AICAR and glutamate. The HisH subunit provides the glutamine amidotransferase activity that produces the ammonia necessary to HisF for the synthesis of IGP and AICAR. This chain is Imidazole glycerol phosphate synthase subunit HisH 2 (hisH2), found in Campylobacter jejuni subsp. jejuni serotype O:2 (strain ATCC 700819 / NCTC 11168).